The following is a 492-amino-acid chain: Protein nucleotidyltransferase YdiU (492 aa).

ATP is bound by residues glycine 88, glycine 90, arginine 91, lysine 111, aspartate 123, glycine 124, arginine 174, and arginine 181. The active-site Proton acceptor is aspartate 250. Positions 251 and 260 each coordinate Mg(2+). An ATP-binding site is contributed by aspartate 260.

Belongs to the SELO family. Mg(2+) serves as cofactor. Requires Mn(2+) as cofactor.

The enzyme catalyses L-seryl-[protein] + ATP = 3-O-(5'-adenylyl)-L-seryl-[protein] + diphosphate. It catalyses the reaction L-threonyl-[protein] + ATP = 3-O-(5'-adenylyl)-L-threonyl-[protein] + diphosphate. The catalysed reaction is L-tyrosyl-[protein] + ATP = O-(5'-adenylyl)-L-tyrosyl-[protein] + diphosphate. It carries out the reaction L-histidyl-[protein] + UTP = N(tele)-(5'-uridylyl)-L-histidyl-[protein] + diphosphate. The enzyme catalyses L-seryl-[protein] + UTP = O-(5'-uridylyl)-L-seryl-[protein] + diphosphate. It catalyses the reaction L-tyrosyl-[protein] + UTP = O-(5'-uridylyl)-L-tyrosyl-[protein] + diphosphate. In terms of biological role, nucleotidyltransferase involved in the post-translational modification of proteins. It can catalyze the addition of adenosine monophosphate (AMP) or uridine monophosphate (UMP) to a protein, resulting in modifications known as AMPylation and UMPylation. The chain is Protein nucleotidyltransferase YdiU from Rhodopseudomonas palustris (strain BisB5).